Here is a 189-residue protein sequence, read N- to C-terminus: Ion-translocating oxidoreductase complex subunit B (189 aa).

The hydrophobic stretch occupies residues 1–26 (MSAVMIAVVLLGLLALVFGAILGFAA). In terms of domain architecture, 4Fe-4S spans 32–90 (EGDPLVDQVESLLPQTQCGQCGYPGCRPYAEAIAGGDQINKCPPGGTATMEKIAELMGV). The [4Fe-4S] cluster site is built by cysteine 49, cysteine 52, cysteine 57, cysteine 73, cysteine 114, cysteine 117, cysteine 120, cysteine 124, cysteine 144, cysteine 147, cysteine 150, and cysteine 154. 4Fe-4S ferredoxin-type domains follow at residues 105–134 (KVAY…GAGK) and 136–164 (MHTV…MLPV).

The protein belongs to the 4Fe4S bacterial-type ferredoxin family. RnfB subfamily. As to quaternary structure, the complex is composed of six subunits: RnfA, RnfB, RnfC, RnfD, RnfE and RnfG. It depends on [4Fe-4S] cluster as a cofactor.

Its subcellular location is the cell inner membrane. Functionally, part of a membrane-bound complex that couples electron transfer with translocation of ions across the membrane. In Shewanella amazonensis (strain ATCC BAA-1098 / SB2B), this protein is Ion-translocating oxidoreductase complex subunit B.